The sequence spans 224 residues: UPF0758 protein Patl_0046 (224 aa).

Residues 102 to 224 form the MPN domain; that stretch reads VFNSAQQTKH…AVSFAERGLI (123 aa). Positions 173, 175, and 186 each coordinate Zn(2+). Positions 173–186 match the JAMM motif motif; that stretch reads HNHPSGVAEPSQAD.

Belongs to the UPF0758 family.

This is UPF0758 protein Patl_0046 from Pseudoalteromonas atlantica (strain T6c / ATCC BAA-1087).